Here is a 404-residue protein sequence, read N- to C-terminus: Chorismate synthase (404 aa).

2 residues coordinate NADP(+): Arg40 and Arg46. Residues 133-135, 266-267, Gly313, 328-332, and Arg354 each bind FMN; these read RSS, QA, and KPIPT. A disordered region spans residues 283–320; it reads PGSQVHDPIEPREDGAQAYPRRTNHAGGTEGGTTTGMP. The disordered stretch occupies residues 337 to 357; sequence LDSVDTATGEPEPTRYERSDI.

It belongs to the chorismate synthase family. Homotetramer. It depends on FMNH2 as a cofactor.

It catalyses the reaction 5-O-(1-carboxyvinyl)-3-phosphoshikimate = chorismate + phosphate. It functions in the pathway metabolic intermediate biosynthesis; chorismate biosynthesis; chorismate from D-erythrose 4-phosphate and phosphoenolpyruvate: step 7/7. Catalyzes the anti-1,4-elimination of the C-3 phosphate and the C-6 proR hydrogen from 5-enolpyruvylshikimate-3-phosphate (EPSP) to yield chorismate, which is the branch point compound that serves as the starting substrate for the three terminal pathways of aromatic amino acid biosynthesis. This reaction introduces a second double bond into the aromatic ring system. The sequence is that of Chorismate synthase from Salinibacter ruber (strain DSM 13855 / M31).